Consider the following 38-residue polypeptide: Toxin CSTX-16 (38 aa).

Glutamine amide is present on residues Q19 and Q38.

Belongs to the cationic peptide 04 (cupiennin) family. 10 (double chain) subfamily. Expressed by the venom gland.

It localises to the secreted. This chain is Toxin CSTX-16, found in Cupiennius salei (American wandering spider).